The sequence spans 338 residues: CRISPR-associated endonuclease Cas1 (338 aa).

Residues Glu155, His220, and Glu235 each contribute to the Mn(2+) site.

It belongs to the CRISPR-associated endonuclease Cas1 family. In terms of assembly, homodimer, forms a heterotetramer with a Cas2 homodimer. Mg(2+) is required as a cofactor. Requires Mn(2+) as cofactor.

Functionally, CRISPR (clustered regularly interspaced short palindromic repeat), is an adaptive immune system that provides protection against mobile genetic elements (viruses, transposable elements and conjugative plasmids). CRISPR clusters contain spacers, sequences complementary to antecedent mobile elements, and target invading nucleic acids. CRISPR clusters are transcribed and processed into CRISPR RNA (crRNA). Acts as a dsDNA endonuclease. Involved in the integration of spacer DNA into the CRISPR cassette. The type III-A Csm effector complex binds crRNA and acts as a crRNA-guided RNase, DNase and cyclic oligoadenylate synthase; binding of target RNA cognate to the crRNA is required for all activities. This is CRISPR-associated endonuclease Cas1 from Mycobacterium tuberculosis (strain CDC 1551 / Oshkosh).